A 330-amino-acid polypeptide reads, in one-letter code: Transcription factor TGA2 (330 aa).

The interval 1-48 (MADTSPRTDVSTDDDTDHPDLGSEGALVNTAASDSSDRSKGKMDQKTL) is disordered. Residues 35–47 (SSDRSKGKMDQKT) show a composition bias toward basic and acidic residues. The 64-residue stretch at 44–107 (DQKTLRRLAQ…GTGDQAHSTG (64 aa)) folds into the bZIP domain. Coiled coils occupy residues 45-142 (QKTL…HAGD) and 217-244 (INNLQQTSQQAEDALSQGMESLQQSLAD). The interval 46 to 66 (KTLRRLAQNREAARKSRLRKK) is basic motif. The tract at residues 72 to 86 (LENSRLKLTQLEQEL) is leucine-zipper. The region spanning 111-327 (ALAFDAEHSR…RALSSLWLAR (217 aa)) is the DOG1 domain.

The protein belongs to the bZIP family. In terms of assembly, binds DNA as a dimer. Interacts with NPR1, NPR3 and NPR4. Interacts with GRXC7/ROXY1 and GRXC9/GRX480. Expressed in the whole plant.

Its subcellular location is the nucleus. Transcriptional activator that binds specifically to the DNA sequence 5'-TGACG-3'. Recognizes ocs elements like the as-1 motif of the cauliflower mosaic virus 35S promoter. Binding to the as-1-like cis elements mediate auxin- and salicylic acid-inducible transcription. Required to induce the systemic acquired resistance (SAR) via the regulation of pathogenesis-related genes expression. Binding to the as-1 element of PR-1 promoter is salicylic acid-inducible and mediated by NPR1. Could also bind to the C-boxes (5'-ATGACGTCAT-3') with high affinity. The protein is Transcription factor TGA2 (TGA2) of Arabidopsis thaliana (Mouse-ear cress).